The following is a 392-amino-acid chain: L-rhamnonate dehydratase (392 aa).

Residues H22 and R48 each contribute to the substrate site. Mg(2+) is bound by residues D214, E240, and E268. Catalysis depends on H318, which acts as the Proton acceptor. Substrate is bound at residue E338.

The protein belongs to the mandelate racemase/muconate lactonizing enzyme family. RhamD subfamily. Homooctamer; tetramer of dimers. Mg(2+) serves as cofactor.

The catalysed reaction is L-rhamnonate = 2-dehydro-3-deoxy-L-rhamnonate + H2O. Its function is as follows. Catalyzes the dehydration of L-rhamnonate to 2-keto-3-deoxy-L-rhamnonate (KDR). The polypeptide is L-rhamnonate dehydratase (Burkholderia ambifaria (strain MC40-6)).